The primary structure comprises 97 residues: M-zodatoxin-Lt7a (97 aa).

A signal peptide spans 1–22 (MKFYVVALALLVAFVCIAESRS). Positions 23–63 (VETERAVDADLEDDLDDLEEYLEGIAEALELEDFPDTEEAR) are excised as a propeptide. A Processing quadruplet motif motif is present at residues 60-63 (EEAR).

Cleavage of the propeptide depends on the processing quadruplet motif (XXXR, with at least one of X being E). In terms of tissue distribution, expressed by the venom gland.

Its subcellular location is the secreted. In terms of biological role, does not have antimicrobial or antifungal activity. Does not have hemolytic activity against rabbit erythrocytes. However, it causes some conductance changes in planar bilayer membranes, without membrane rupture, suggesting a cytolytic function on other biological targets. It causes paralysis, but is not lethal when injected into insect (M.domestica) larvae. This is M-zodatoxin-Lt7a from Lachesana tarabaevi (Spider).